Here is a 165-residue protein sequence, read N- to C-terminus: Fatty acid-binding protein homolog 3 (165 aa).

Residues Met-1 to Ala-19 form the signal peptide.

This sequence belongs to the calycin superfamily. Fatty-acid binding protein (FABP) family. As to expression, expressed in presumptive hypodermal cells by the comma stage and in posterior body wall muscle cells by the two-fold stage. From L1 to adult stages, expression continues in body wall muscle cells adjacent to the pseudocoelom, while hypodermal expression is extinguished.

The protein resides in the secreted. Its function is as follows. May play a role in sequestering potentially toxic fatty acids and their peroxidation products, or it may be involved in the maintenance of the impermeable lipid layer of the eggshell. This Caenorhabditis elegans protein is Fatty acid-binding protein homolog 3 (lbp-3).